A 553-amino-acid polypeptide reads, in one-letter code: MPQLNSGGGDELGANDELIRFKDEGEQEEKSPGEGSAEGDLADVKSSLVNESENHSSDSDSEVERRPPPRETFEKPRDYLSEAFRRQQDAAFFKGPPYAGYPFLMIPDLGGHYLPNGALSPSARTYLQMKWPLLDSPSTAGLKDARSPSPAHLSNKVPVVQHPHHMHPLTPLITYSNEHFSPGTPPGHLSPEIDPKTGIPRPPHPSELSPYYPLSPGAVGQIPHPLGWLVPQQGQPMYSIPPGGFRHPYPALAMNASMSSLVSSRFSPHMVPPPHHGLHTSGIPHPAIVSPIVKQEPSSGNISPNLITKPSVVVKKEEEKKPHIKKPLNAFMLYMKEMRAKVVAECTLKESAAINQILGRRWHSLSREEQAKYYELARKERQLHSQLYPTWSARDNYGKRKKRKRDKQSPEMEITKTKKMCVQHLPADKSCDSPASSHGSMLDSPATPSAALASPAAPAATHSEQAQPLSLTTKPEARAQLSLSHSAAFLASKSPPSSSLSGSLSSPVGSPLLSRPIPLTSSILSPPCVFPSALQALPLLQAQPLSLVTKSSD.

Residues 1-11 (MPQLNSGGGDE) show a composition bias toward gly residues. The tract at residues 1-61 (MPQLNSGGGD…SENHSSDSDS (61 aa)) is interaction with CTNNB1. Disordered regions lie at residues 1–77 (MPQL…EKPR), 183–213 (GTPPGHLSPEIDPKTGIPRPPHPSELSPYYP), and 392–474 (SARD…LTTK). 2 stretches are compositionally biased toward basic and acidic residues: residues 17-32 (ELIRFKDEGEQEEKSP) and 52-77 (SENHSSDSDSEVERRPPPRETFEKPR). An interaction with AES and TLE4 region spans residues 109–312 (LGGHYLPNGA…SPNLITKPSV (204 aa)). The HMG box DNA-binding region spans 324 to 392 (IKKPLNAFML…LHSQLYPTWS (69 aa)). Residues 407 to 416 (KQSPEMEITK) are compositionally biased toward basic and acidic residues. Residues 408–553 (QSPEMEITKT…PLSLVTKSSD (146 aa)) form an interaction with CTBP region. Residues 444 to 463 (SPATPSAALASPAAPAATHS) show a composition bias toward low complexity. Polar residues predominate over residues 464 to 473 (EQAQPLSLTT).

The protein belongs to the TCF/LEF family. In terms of assembly, interacts with csnk1e, ctnnb1, ctbp, dact1 and gsk3b. May interact with ase and tle4. Post-translationally, phosphorylated. Phosphorylation by csnk1e promotes binding to ctnnb1 while phosphorylation by gsk3b may reverse this effect.

Its subcellular location is the nucleus. Participates in the Wnt signaling pathway. Binds to DNA and acts as a repressor in the absence of ctnnb1, and as an activator in its presence. Required early in development for the establishment of the dorsal body axis in response to maternal Wnt signaling. The protein is Transcription factor 7-like 1 (tcf7l1) of Xenopus tropicalis (Western clawed frog).